The following is a 664-amino-acid chain: MKRRNADCSKLRRPLKRNRITEGIHSSTFLYLKFLVVWALVLLADFVLEFRFEYLWPFWLFIRSVYDSFRYQGLAFSVFFVCVAFTSDIICLLFIPKQWLFFAASTYVWVQYVWHTERGVCLPTVSLWILFVYIEAAIRFKDLKHFHVDLCRPFAAHCIGYPVVTLGFGFKSYVSYKMRLRKQKEVQKENEFYMQLLQQALPPEQQMLQRQERETEEATSKGMSEADSVLVAQNGTAINKKLPISLPELEYKEKGKDSAKDKKQQQHSIGINNNILQTVDAKLQDIEYMENHLNAKRLNNELGGSAENLFLKEEVGAGGGSAPSKHYKNSSPRSHNSTNGSVPSSSSNRSDKKQKCTGKNLAPHRDLMENCIPNNQLSKPDALVRLEQDIKKLKADLQASRQVEQDLRSQISSLSSAERSMRSELGQLRQENELLQNKLHNAVQAKQKDKQTIVQLEKRLKAEQEARAAVEKQLAEEKKRKKMEEATAARAVALAAASRGECTDSLKSRIRELESECKKLTHDMKLKEEQIRELELKAQELHKYKENEKDTEVLMSALSAMQDKTQHLENSLSAETRIKLDLFSALGDAKRQLEIAQGQILQKEQEIKELKQKIAEVMAVMPSITYSAETNNMTPVTPHYSSKFMDTSPSSLDPNASVYQPLKK.

The next 4 helical transmembrane spans lie at 28–48, 75–95, 120–140, and 154–174; these read TFLYLKFLVVWALVLLADFVL, AFSVFFVCVAFTSDIICLLFI, VCLPTVSLWILFVYIEAAIRF, and FAAHCIGYPVVTLGFGFKSYV. Residues 206–225 form a disordered region; sequence QMLQRQERETEEATSKGMSE. The span at 210-219 shows a compositional bias: basic and acidic residues; sequence RQERETEEAT. 5 N-linked (GlcNAc...) asparagine glycosylation sites follow: Asn-234, Asn-336, Asn-339, Asn-348, and Asn-655. Disordered regions lie at residues 315–364 and 644–664; these read VGAG…LAPH and FMDTSPSSLDPNASVYQPLKK. Over residues 334 to 348 the composition is skewed to low complexity; the sequence is SHNSTNGSVPSSSSN. The segment covering 644–658 has biased composition (polar residues); it reads FMDTSPSSLDPNASV.

Belongs to the macoilin family.

The protein resides in the nucleus membrane. It localises to the rough endoplasmic reticulum membrane. May play a role in the regulation of neuronal activity. This is Macoilin-1 from Danio rerio (Zebrafish).